The chain runs to 1729 residues: Cullin-7 (1729 aa).

The segment at 350–388 (DRPRSSARSPGSIFQPQLADVSPGLPATQAQPSFRRSRH) is disordered. Position 371 is a phosphoserine (S371). In terms of domain architecture, CPH spans 392-465 (RSEFASGNTY…HWHMLEILGF (74 aa)). The span at 632–642 (SEDAAKVEAKE) shows a compositional bias: basic and acidic residues. Residues 632-654 (SEDAAKVEAKEPPSQSPNTPLQR) form a disordered region. Residues 845 to 1024 (PINIPFFDVF…HTRLFYMVRA (180 aa)) enclose the DOC domain. Positions 1373-1405 (VGHGASGKEHKSEKEEEAGAAAAVDVAEGEEEE) are disordered. K1607 is covalently cross-linked (Glycyl lysine isopeptide (Lys-Gly) (interchain with G-Cter in NEDD8)).

It belongs to the cullin family. In terms of assembly, component of the 3M complex, composed of core components CUL7, CCDC8 and OBSL1. Component of the Cul7-RING(FBXW8) complex consisting of CUL7, RBX1, SKP1 and FBXW8. Within the Cul7-RING(FBXW8) complex interacts with FBXW8 and RBX1, but not with SKP1. Interacts with CUL1 (via the C-terminal domain); the interaction seems to be mediated by FBXW8; it is likely specific to FBXW8, but not other F-box proteins. Interacts (via the CPH domain) with p53/TP53; the interaction preferentially involves tetrameric and dimeric p53/TP53; this interaction recruits p53/TP53 for ubiquitination by neddylated CUL1-RBX1. The CUL7-CUL9 heterodimer seems to interact specifically with p53/TP53. Interacts with FBXW8; interaction is mutually exclusive of binding to CUL9 or p53/TP53. Interacts with CUL9; leading to inhibited CUL9 activity. Interacts with OBSL1. Interacts (as part of the 3M complex) with HDAC4 and HDAC5; it is negatively regulated by ANKRA2.

The protein localises to the cytoplasm. The protein resides in the cytoskeleton. Its subcellular location is the microtubule organizing center. It localises to the centrosome. It is found in the perinuclear region. The protein localises to the golgi apparatus. It functions in the pathway protein modification; protein ubiquitination. Core component of the 3M and Cul7-RING(FBXW8) complexes, which mediate the ubiquitination and subsequent proteasomal degradation of target proteins. Core component of the 3M complex, a complex required to regulate microtubule dynamics and genome integrity. It is unclear how the 3M complex regulates microtubules, it could act by controlling the level of a microtubule stabilizer. The Cul7-RING(FBXW8) complex alone lacks ubiquitination activity and does not promote polyubiquitination and proteasomal degradation of p53/TP53. However it mediates recruitment of p53/TP53 for ubiquitination by neddylated CUL1-RBX1. Interaction with CUL9 is required to inhibit CUL9 activity and ubiquitination of BIRC5. The Cul7-RING(FBXW8) complex also mediates ubiquitination and consequent degradation of target proteins such as GORASP1, IRS1 and MAP4K1/HPK1. Ubiquitination of GORASP1 regulates Golgi morphogenesis and dendrite patterning in brain. Mediates ubiquitination and degradation of IRS1 in a mTOR-dependent manner: the Cul7-RING(FBXW8) complex recognizes and binds IRS1 previously phosphorylated by S6 kinase (RPS6KB1 or RPS6KB2). The Cul7-RING(FBXW8) complex also mediates ubiquitination of MAP4K1/HPK1: recognizes and binds autophosphorylated MAP4K1/HPK1, leading to its degradation, thereby affecting cell proliferation and differentiation. Acts as a regulator in trophoblast cell epithelial-mesenchymal transition and placental development. While the Cul7-RING(FBXW8) and the 3M complexes are associated and involved in common processes, CUL7 and the Cul7-RING(FBXW8) complex may have additional functions. Probably plays a role in the degradation of proteins involved in endothelial proliferation and/or differentiation. This is Cullin-7 (CUL7) from Pongo abelii (Sumatran orangutan).